Consider the following 189-residue polypeptide: Ribonuclease HII (189 aa).

Positions 1–189 (MIAGVDEAGR…PVRRALNIDC (189 aa)) constitute an RNase H type-2 domain. 3 residues coordinate a divalent metal cation: D6, E7, and D98.

It belongs to the RNase HII family. Mn(2+) is required as a cofactor. It depends on Mg(2+) as a cofactor.

It localises to the cytoplasm. It catalyses the reaction Endonucleolytic cleavage to 5'-phosphomonoester.. In terms of biological role, endonuclease that specifically degrades the RNA of RNA-DNA hybrids. The chain is Ribonuclease HII from Acinetobacter baylyi (strain ATCC 33305 / BD413 / ADP1).